Reading from the N-terminus, the 167-residue chain is Early nodulin-like protein 16 (167 aa).

The first 24 residues, 1–24 (MARVAVLVAGAVLAFLLAATNVTA), serve as a signal peptide directing secretion. A Phytocyanin domain is found at 25–126 (KRWTVGDNKF…GMKLAVLVEK (102 aa)). Asn40, Asn71, Asn86, and Asn99 each carry an N-linked (GlcNAc...) asparagine glycan. Cys78 and Cys114 form a disulfide bridge. Asn138 is lipidated: GPI-anchor amidated asparagine. Residues 139–167 (SARRTFSVSGFAYQFLIPVAVFAAVGTRY) constitute a propeptide, removed in mature form.

The protein belongs to the early nodulin-like (ENODL) family.

Its subcellular location is the cell membrane. In terms of biological role, may act as a carbohydrate transporter. This chain is Early nodulin-like protein 16, found in Arabidopsis thaliana (Mouse-ear cress).